Consider the following 405-residue polypeptide: S-adenosylmethionine:tRNA ribosyltransferase-isomerase (405 aa).

Belongs to the QueA family. In terms of assembly, monomer.

It is found in the cytoplasm. The catalysed reaction is 7-aminomethyl-7-carbaguanosine(34) in tRNA + S-adenosyl-L-methionine = epoxyqueuosine(34) in tRNA + adenine + L-methionine + 2 H(+). The protein operates within tRNA modification; tRNA-queuosine biosynthesis. Transfers and isomerizes the ribose moiety from AdoMet to the 7-aminomethyl group of 7-deazaguanine (preQ1-tRNA) to give epoxyqueuosine (oQ-tRNA). This chain is S-adenosylmethionine:tRNA ribosyltransferase-isomerase, found in Psychrobacter cryohalolentis (strain ATCC BAA-1226 / DSM 17306 / VKM B-2378 / K5).